We begin with the raw amino-acid sequence, 490 residues long: Cytochrome P450 2C8 (490 aa).

Substrate contacts are provided by S100, N204, and R241. S100 carries the post-translational modification Phosphoserine. C435 provides a ligand contact to heme.

It belongs to the cytochrome P450 family. Requires heme as cofactor.

Its subcellular location is the endoplasmic reticulum membrane. The protein localises to the microsome membrane. It catalyses the reaction an organic molecule + reduced [NADPH--hemoprotein reductase] + O2 = an alcohol + oxidized [NADPH--hemoprotein reductase] + H2O + H(+). The enzyme catalyses (5Z,8Z,11Z,14Z)-eicosatetraenoate + reduced [NADPH--hemoprotein reductase] + O2 = (11R,12S)-epoxy-(5Z,8Z,14Z)-eicosatrienoate + oxidized [NADPH--hemoprotein reductase] + H2O + H(+). It carries out the reaction (5Z,8Z,11Z,14Z)-eicosatetraenoate + reduced [NADPH--hemoprotein reductase] + O2 = (11S,12R)-epoxy-(5Z,8Z,14Z)-eicosatrienoate + oxidized [NADPH--hemoprotein reductase] + H2O + H(+). The catalysed reaction is (5Z,8Z,11Z,14Z)-eicosatetraenoate + reduced [NADPH--hemoprotein reductase] + O2 = (14R,15S)-epoxy-(5Z,8Z,11Z)-eicosatrienoate + oxidized [NADPH--hemoprotein reductase] + H2O + H(+). It catalyses the reaction (5Z,8Z,11Z,14Z)-eicosatetraenoate + reduced [NADPH--hemoprotein reductase] + O2 = (14S,15R)-epoxy-(5Z,8Z,11Z)-eicosatrienoate + oxidized [NADPH--hemoprotein reductase] + H2O + H(+). The enzyme catalyses (5Z,8Z,11Z,14Z,17Z)-eicosapentaenoate + reduced [NADPH--hemoprotein reductase] + O2 = 11,12-epoxy-(5Z,8Z,14Z,17Z)-eicosatetraenoate + oxidized [NADPH--hemoprotein reductase] + H2O + H(+). It carries out the reaction (5Z,8Z,11Z,14Z,17Z)-eicosapentaenoate + reduced [NADPH--hemoprotein reductase] + O2 = 14,15-epoxy-(5Z,8Z,11Z,17Z)-eicosatetraenoate + oxidized [NADPH--hemoprotein reductase] + H2O + H(+). The catalysed reaction is (5Z,8Z,11Z,14Z,17Z)-eicosapentaenoate + reduced [NADPH--hemoprotein reductase] + O2 = (17R,18S)-epoxy-(5Z,8Z,11Z,14Z)-eicosatetraenoate + oxidized [NADPH--hemoprotein reductase] + H2O + H(+). It catalyses the reaction (5Z,8Z,11Z,14Z,17Z)-eicosapentaenoate + reduced [NADPH--hemoprotein reductase] + O2 = (17S,18R)-epoxy-(5Z,8Z,11Z,14Z)-eicosatetraenoate + oxidized [NADPH--hemoprotein reductase] + H2O + H(+). The enzyme catalyses (4Z,7Z,10Z,13Z,16Z,19Z)-docosahexaenoate + reduced [NADPH--hemoprotein reductase] + O2 = (19R,20S)-epoxy-(4Z,7Z,10Z,13Z,16Z)-docosapentaenoate + oxidized [NADPH--hemoprotein reductase] + H2O + H(+). It carries out the reaction (4Z,7Z,10Z,13Z,16Z,19Z)-docosahexaenoate + reduced [NADPH--hemoprotein reductase] + O2 = (19S,20R)-epoxy-(4Z,7Z,10Z,13Z,16Z)-docosapentaenoate + oxidized [NADPH--hemoprotein reductase] + H2O + H(+). The catalysed reaction is all-trans-retinoate + reduced [NADPH--hemoprotein reductase] + O2 = all-trans-4-hydroxyretinoate + oxidized [NADPH--hemoprotein reductase] + H2O + H(+). It catalyses the reaction 17beta-estradiol + reduced [NADPH--hemoprotein reductase] + O2 = 16alpha,17beta-estriol + oxidized [NADPH--hemoprotein reductase] + H2O + H(+). The enzyme catalyses estrone + reduced [NADPH--hemoprotein reductase] + O2 = 16alpha-hydroxyestrone + oxidized [NADPH--hemoprotein reductase] + H2O + H(+). Its pathway is steroid metabolism. It functions in the pathway lipid metabolism; arachidonate metabolism. It participates in cofactor metabolism; retinol metabolism. A cytochrome P450 monooxygenase involved in the metabolism of various endogenous substrates, including fatty acids, steroid hormones and vitamins. Mechanistically, uses molecular oxygen inserting one oxygen atom into a substrate, and reducing the second into a water molecule, with two electrons provided by NADPH via cytochrome P450 reductase (NADPH--hemoprotein reductase). Primarily catalyzes the epoxidation of double bonds of polyunsaturated fatty acids (PUFA) with a preference for the last double bond. Catalyzes the hydroxylation of carbon-hydrogen bonds. Metabolizes all trans-retinoic acid toward its 4-hydroxylated form. Displays 16-alpha hydroxylase activity toward estrogen steroid hormones, 17beta-estradiol (E2) and estrone (E1). Plays a role in the oxidative metabolism of xenobiotics. It is the principal enzyme responsible for the metabolism of the anti-cancer drug paclitaxel (taxol). This Homo sapiens (Human) protein is Cytochrome P450 2C8.